We begin with the raw amino-acid sequence, 184 residues long: Photosystem I assembly protein Ycf4 (184 aa).

Transmembrane regions (helical) follow at residues 22-42 (LCWA…GFSS) and 64-84 (IVMC…WCTI).

This sequence belongs to the Ycf4 family.

It localises to the plastid. The protein localises to the chloroplast thylakoid membrane. Its function is as follows. Seems to be required for the assembly of the photosystem I complex. This chain is Photosystem I assembly protein Ycf4, found in Angiopteris evecta (Mule's foot fern).